Here is a 214-residue protein sequence, read N- to C-terminus: Probable nicotinate-nucleotide adenylyltransferase (214 aa).

This sequence belongs to the NadD family.

It catalyses the reaction nicotinate beta-D-ribonucleotide + ATP + H(+) = deamido-NAD(+) + diphosphate. It participates in cofactor biosynthesis; NAD(+) biosynthesis; deamido-NAD(+) from nicotinate D-ribonucleotide: step 1/1. Its function is as follows. Catalyzes the reversible adenylation of nicotinate mononucleotide (NaMN) to nicotinic acid adenine dinucleotide (NaAD). The polypeptide is Probable nicotinate-nucleotide adenylyltransferase (Pseudomonas fluorescens (strain ATCC BAA-477 / NRRL B-23932 / Pf-5)).